The chain runs to 384 residues: MLPSNEPLTALGRETTTPLSIQLLLFVDDRPSSQEIIRQIQSYLQSLKSDYPIDLQIIEIRQQPHLVEHFRLVATPALVKIAPGPRHTLAGSNLVEQFKKWLVRWQKAIKEEVKNHHAEDAQLQEVEHSGELIRIADEVFRLKQEKEELLEQLKFKDQILAMLAHDLRSPLTAASIAVETLELAYHQPDTERSLQLREQLHQQARKQFRIMNRLITDILQASKSMAAQFTLHQSKFYLQSLCQEILSQFTDTFQEKTLIFQSDIPQDLPPVYADEELIRQVIINLLENGIKYTPAGGEITLSVLHRTTQKVQVSISDTGPGIPEEKQEHIFEGHVRLKRDEGKEGYGIGLSVCRKIIRAHYGQIWVDSVPDHGSSFHFTLPVYR.

The Histidine kinase domain occupies 162–384 (MLAHDLRSPL…SFHFTLPVYR (223 aa)). His-165 bears the Phosphohistidine; by autocatalysis mark.

Homooligomerizes. Interacts with KaiC. Participates in the KaiABC clock complex, whose core is composed of a KaiC homohexamer, 6 KaiB and up to 6 KaiA dimers. SasA and KaiB(fs) compete to bind to KaiC.

It carries out the reaction ATP + protein L-histidine = ADP + protein N-phospho-L-histidine.. In terms of biological role, member of the two-component regulatory system SasA/RpaA involved in genome-wide circadian gene expression. One of several clock output pathways. Participates in the Kai clock protein complex, the main circadian regulator in cyanobacteria, via its interaction with KaiC. KaiC enhances the autophosphorylation activity of SasA, which then transfers its phosphate group to RpaA to activate it. In addition to its output function, recruits fold-shifted KaiB (KaiB(fs)) to KaiC to cooperatively form the KaiB(6):KaiC(6) complex (independent of SasA kinase activity). Required for robustness of the circadian rhythm of gene expression and is involved in clock output, also required for adaptation to light/dark cycles. The sequence is that of Adaptive-response sensory kinase SasA from Microcystis aeruginosa (strain NIES-843 / IAM M-2473).